The sequence spans 140 residues: Profilin-2 (140 aa).

A2 is subject to N-acetylalanine.

This sequence belongs to the profilin family. Occurs in many kinds of cells as a complex with monomeric actin in a 1:1 ratio. Interacts with PFN2. Interacts with ACTMAP (via N-terminus); the interaction may facilitate efficient cleavage of the acetylated N-terminus of immature actin by ACTMAP.

The protein localises to the cytoplasm. It is found in the cytoskeleton. Binds to actin and affects the structure of the cytoskeleton. At high concentrations, profilin prevents the polymerization of actin, whereas it enhances it at low concentrations. By binding to PIP2, it inhibits the formation of IP3 and DG. In Bos taurus (Bovine), this protein is Profilin-2 (PFN2).